We begin with the raw amino-acid sequence, 434 residues long: Nicotinate phosphoribosyltransferase (434 aa).

Phosphohistidine; by autocatalysis is present on His-242.

This sequence belongs to the NAPRTase family. In terms of processing, transiently phosphorylated on a His residue during the reaction cycle. Phosphorylation strongly increases the affinity for substrates and increases the rate of nicotinate D-ribonucleotide production. Dephosphorylation regenerates the low-affinity form of the enzyme, leading to product release.

The enzyme catalyses nicotinate + 5-phospho-alpha-D-ribose 1-diphosphate + ATP + H2O = nicotinate beta-D-ribonucleotide + ADP + phosphate + diphosphate. It participates in cofactor biosynthesis; NAD(+) biosynthesis; nicotinate D-ribonucleotide from nicotinate: step 1/1. Catalyzes the synthesis of beta-nicotinate D-ribonucleotide from nicotinate and 5-phospho-D-ribose 1-phosphate at the expense of ATP. The protein is Nicotinate phosphoribosyltransferase of Agrobacterium fabrum (strain C58 / ATCC 33970) (Agrobacterium tumefaciens (strain C58)).